A 407-amino-acid polypeptide reads, in one-letter code: DAZ-associated protein 1 (407 aa).

An N-acetylmethionine modification is found at Met-1. RRM domains are found at residues 10–97 (GKLF…RTRP) and 113–190 (NKIF…RAEP). The segment at 74–117 (TLDGRNIDPKPCTPRGMQPERTRPKEGWQKGPRSDNSKSNKIFV) is disordered. A compositionally biased stretch (basic and acidic residues) spans 91-111 (QPERTRPKEGWQKGPRSDNSK). Lys-150 carries the post-translational modification N6-acetyllysine. The segment covering 185–194 (VKRAEPRDSK) has biased composition (basic and acidic residues). Positions 185–407 (VKRAEPRDSK…NVQGFHPYRR (223 aa)) are disordered. Positions 195-207 (SQAPGQPGASQWG) are enriched in polar residues. A compositionally biased stretch (pro residues) spans 247-262 (GPPPAGRGAPPPPPPF). Arg-253 is subject to Omega-N-methylarginine. Over residues 280–294 (FPQGYGAPPQFSFGY) the composition is skewed to low complexity. Over residues 295-315 (GPPPPPPDQFAPPGVPPPPAT) the composition is skewed to pro residues. The segment covering 364–379 (SDPSQQPPSYGGPSVP) has biased composition (low complexity). Gly residues predominate over residues 380-393 (GSGGPPAGGSGFGR).

Interacts with DAZ and DAZL. Acetylation at Lys-150 is predominantly observed in the nuclear fraction, and may regulate nucleocytoplasmic transport. As to expression, mainly expressed in testis. Expressed to a lower level in thymus. Weakly or not expressed in heart, liver, brain, placenta, lung, skeletal muscle, kidney and pancreas.

It is found in the cytoplasm. Its subcellular location is the nucleus. Functionally, RNA-binding protein, which may be required during spermatogenesis. The sequence is that of DAZ-associated protein 1 (DAZAP1) from Homo sapiens (Human).